The following is a 435-amino-acid chain: Keratin, type I cytoskeletal 18 (435 aa).

The segment covering 1–28 (MSLRSSYSVRSSTSQVPVSQMSQMSQMS) has biased composition (low complexity). Residues 1–36 (MSLRSSYSVRSSTSQVPVSQMSQMSQMSIKRTTNVP) are disordered. The head stretch occupies residues 2-88 (SLRSSYSVRS…TGATGDIMGN (87 aa)). The segment at 89–123 (EKMAMQNLNDRLASYLRSETLEQANSKLELKIREA) is coil 1A. An IF rod domain is found at 89–399 (EKMAMQNLND…RLLDGGDFKL (311 aa)). A linker 1 region spans residues 124 to 140 (LEKKGPEVCDYSRFQPI). Residues 141 to 232 (IDDLRRKIFD…KNHDNEVMEL (92 aa)) are coil 1B. A linker 12 region spans residues 233 to 256 (RNQISHSGVQVDVDAPKGQDLAKI). Residues 257-394 (MEEIRSKYEK…IATYRRLLDG (138 aa)) form a coil 2 region. The tail stretch occupies residues 395 to 435 (GDFKLQDALEEQKRVKVMTVTQTLVDGKVVSSSTETKEKKF).

It belongs to the intermediate filament family. Heterotetramer of two type I and two type II keratins. Keratin-18 associates with keratin-8. Phosphorylated. In terms of processing, proteolytically cleaved by caspases during epithelial cell apoptosis. Abundantly expressed in an even distribution throughout the optic nerve, localizing specifically to the astrocyte domains. Moderately expressed in spinal cord, brain, liver and oocytes.

Its function is as follows. When phosphorylated, plays a role in filament reorganization. The protein is Keratin, type I cytoskeletal 18 (krt18) of Carassius auratus (Goldfish).